A 453-amino-acid chain; its full sequence is tRNA modification GTPase MnmE (453 aa).

The (6S)-5-formyl-5,6,7,8-tetrahydrofolate site is built by arginine 22, glutamate 79, and lysine 119. Positions glycine 215–glycine 376 constitute a TrmE-type G domain. A K(+)-binding site is contributed by asparagine 225. Residues asparagine 225–serine 230, threonine 244–threonine 250, aspartate 269–glycine 272, and asparagine 334–aspartate 337 contribute to the GTP site. Position 229 (serine 229) interacts with Mg(2+). K(+)-binding residues include threonine 244, isoleucine 246, and threonine 249. Residue threonine 250 participates in Mg(2+) binding. Residue lysine 453 participates in (6S)-5-formyl-5,6,7,8-tetrahydrofolate binding.

The protein belongs to the TRAFAC class TrmE-Era-EngA-EngB-Septin-like GTPase superfamily. TrmE GTPase family. In terms of assembly, homodimer. Heterotetramer of two MnmE and two MnmG subunits. K(+) is required as a cofactor.

The protein localises to the cytoplasm. In terms of biological role, exhibits a very high intrinsic GTPase hydrolysis rate. Involved in the addition of a carboxymethylaminomethyl (cmnm) group at the wobble position (U34) of certain tRNAs, forming tRNA-cmnm(5)s(2)U34. In Shewanella amazonensis (strain ATCC BAA-1098 / SB2B), this protein is tRNA modification GTPase MnmE.